A 152-amino-acid chain; its full sequence is Protein-export protein SecB (152 aa).

This sequence belongs to the SecB family. In terms of assembly, homotetramer, a dimer of dimers. One homotetramer interacts with 1 SecA dimer.

The protein resides in the cytoplasm. In terms of biological role, one of the proteins required for the normal export of preproteins out of the cell cytoplasm. It is a molecular chaperone that binds to a subset of precursor proteins, maintaining them in a translocation-competent state. It also specifically binds to its receptor SecA. In Thiobacillus denitrificans (strain ATCC 25259 / T1), this protein is Protein-export protein SecB.